The chain runs to 250 residues: uncharacterized protein (250 aa).

S15, L17, D36, D56, V57, and C82 together coordinate NAD(+). S143 is a binding site for substrate. 4 residues coordinate NAD(+): Y156, K160, F189, and T191. The Proton acceptor role is filled by Y156.

Belongs to the short-chain dehydrogenases/reductases (SDR) family.

This is an uncharacterized protein from Mycobacterium tuberculosis (strain CDC 1551 / Oshkosh).